Consider the following 261-residue polypeptide: Thiamine thiazole synthase (261 aa).

Residues S33, E52 to R53, G60, V124, and H152 to D154 contribute to the NAD(+) site. Fe cation is bound by residues D154 and H169. M219 is a binding site for NAD(+). R229 contributes to the glycine binding site.

It belongs to the THI4 family. Homooctamer; tetramer of dimers. Fe(2+) serves as cofactor.

It catalyses the reaction hydrogen sulfide + glycine + NAD(+) = ADP-5-ethyl-4-methylthiazole-2-carboxylate + nicotinamide + 3 H2O + H(+). It participates in cofactor biosynthesis; thiamine diphosphate biosynthesis. Functionally, involved in the biosynthesis of the thiazole moiety of thiamine. Catalyzes the conversion of NAD and glycine to adenosine diphosphate 5-(2-hydroxyethyl)-4-methylthiazole-2-carboxylate (ADT), an adenylated thiazole intermediate, using free sulfide as a source of sulfur. The polypeptide is Thiamine thiazole synthase (Pyrobaculum arsenaticum (strain DSM 13514 / JCM 11321 / PZ6)).